The sequence spans 188 residues: Pallidipin (188 aa).

An N-terminal signal peptide occupies residues 1 to 18 (MKVIIAATLLGILMHAFA). Cystine bridges form between Cys21–Cys137, Cys55–Cys184, and Cys89–Cys105.

This sequence belongs to the calycin superfamily. Triabin family. As to expression, expressed in salivary glands.

It localises to the secreted. In terms of biological role, has been described as a specific inhibitor of collagen-induced platelet aggregation. However, as it does not affect platelet shape change or adhesion, it is plausible that it exerts its antiplatelet activity by a mechanism similar to that of triplatin, moubatin and dipetalodipin as scavenging eicosanoids involved in inflammation such as thromboxane A2 (TXA2). This is Pallidipin from Meccus pallidipennis (Triatomine bug).